The sequence spans 882 residues: MTSDASHMLEAALEQMDGIIAGTKTAADFSDGTCEPGLSPPSTCLNSMPVLHLIEDLRLALEMLALPQEREALLSQVPGPTATYIKEWFEDSLSQVNHHGAASNETYQERLARLEGDKESLILQVSVLTDQVEAQGEKIRDLEVCLEGHQVKLNAAEEMLQQELLSRTSLETQKLDLMTEVSELKLKLVGMEKEQKEQEEKQRKAEELLQELKHLKIKVEELENERNQYEWELKATKAEVAQLQEQVALKDAEIERLHSQLSRSAALHSDHAERDQEIHRLKMGMETLLVANEDKDRRIEELTGLLNKYLRVKEIVMATQGPSERTLSINEDEIEGSFRKWNTTNKSPEEVPKQEISPRCSSPTPGPPPLPQKSLESRAQKKLSCSLEDLRRESGDKCVDGNQLSPVGEPKDSSFLAEQKYPTLPGKLSGATPNGEAAKSPPTASLQPDSSGSSQPKLNRGWSVSAPVLRDTEGGWEDIVSSASSGTESSPQSPVTPDGKRSPKGIKKFWGKIRRTQSGNFNTDAPGMAEFRRGGLRATAGPRLSRTRDTKGQKCDANAPFAQWSTERVCTWMEDFGLGQYVIFARQWVTSGHTLLTATPQDMEKELGIKHPLHRKKLVLAVKAINAKQEETSALLDHIWVTRWLDDIGLPQYKDQFHESRVDGRMLQYLTVNDLLFLKVTSQLHHLSIKCAIHVLHVNKFNPNCLHRRPADESNLSPSEVVQWSNHRVMEWLRSVDLAEYAPNLRGSGVHGGLIILEPRFTGDTLAMLLNIPPQKTLLRRHLTTKFNALIGPEAEQEKRDKMASPAYTPLTTTAKVRPRKLGFSHFGNMRKKKFDESTDYICPMEPGDAVSDSHRVYGVYRGLSPLDNHELDGLDQVGQIS.

The stretch at 101-303 (AASNETYQER…DKDRRIEELT (203 aa)) forms a coiled coil. S328, S362, and S386 each carry phosphoserine. The disordered stretch occupies residues 339 to 554 (RKWNTTNKSP…SRTRDTKGQK (216 aa)). The span at 388–399 (EDLRRESGDKCV) shows a compositional bias: basic and acidic residues. Composition is skewed to polar residues over residues 442–457 (PTASLQPDSSGSSQPK) and 481–495 (SSASSGTESSPQSPV). Residues S502 and S518 each carry the phosphoserine modification. Residues 502-515 (SPKGIKKFWGKIRR) show a composition bias toward basic residues. SAM domains lie at 564 to 628 (WSTE…INAK), 636 to 699 (LDHI…LHVN), and 724 to 789 (WSNH…KFNA).

This sequence belongs to the liprin family. Liprin-beta subfamily. In terms of assembly, forms homodimers and heterodimers. Expressed widely. Strong expression in liver, kidney, intestine, heart, lung and testis. Low expression in brain and thymus.

In terms of biological role, may regulate the disassembly of focal adhesions. Did not bind receptor-like tyrosine phosphatases type 2A. This chain is Liprin-beta-2 (Ppfibp2), found in Mus musculus (Mouse).